A 98-amino-acid polypeptide reads, in one-letter code: MGTGFSKKKKEARLIQQQMSLVQNELQNLEVVGVAGSGLVTITLTGDGEMKQVKIKPECVDVEDLEGLEMLIRAAHADAHKRLKEQSPPIPGFPGFLA.

Belongs to the YbaB/EbfC family. Homodimer.

It is found in the cytoplasm. It localises to the nucleoid. Binds to DNA and alters its conformation. May be involved in regulation of gene expression, nucleoid organization and DNA protection. This is Nucleoid-associated protein pc0477 from Protochlamydia amoebophila (strain UWE25).